The primary structure comprises 486 residues: D-mannonate oxidoreductase (486 aa).

Residue 25 to 36 participates in NAD(+) binding; that stretch reads IVHLGCGAFHRA.

It belongs to the mannitol dehydrogenase family. UxuB subfamily.

It carries out the reaction D-mannonate + NAD(+) = keto-D-fructuronate + NADH + H(+). Its pathway is carbohydrate metabolism; pentose and glucuronate interconversion. The chain is D-mannonate oxidoreductase (uxuB) from Escherichia coli (strain K12).